Consider the following 662-residue polypeptide: Bifunctional polymyxin resistance protein ArnA (662 aa).

The interval 1–307 (MTSKAVVFAY…ELGLVEGARL (307 aa)) is formyltransferase ArnAFT. H106 functions as the Proton donor; for formyltransferase activity in the catalytic mechanism. (6R)-10-formyltetrahydrofolate is bound by residues R116 and 138-142 (IERAD). A dehydrogenase ArnADH region spans residues 316–662 (RRTRVLILGV…EALREREAQA (347 aa)). NAD(+) contacts are provided by residues D349 and 370 to 371 (DI). Residues A395, Y400, and 434-435 (TS) each bind UDP-alpha-D-glucuronate. E436 (proton acceptor; for decarboxylase activity) is an active-site residue. UDP-alpha-D-glucuronate is bound by residues R462, N493, 527–536 (RLVDGGAQKR), and Y614. The Proton donor; for decarboxylase activity role is filled by R620.

It in the N-terminal section; belongs to the Fmt family. UDP-L-Ara4N formyltransferase subfamily. The protein in the C-terminal section; belongs to the NAD(P)-dependent epimerase/dehydratase family. UDP-glucuronic acid decarboxylase subfamily. As to quaternary structure, homohexamer, formed by a dimer of trimers.

It carries out the reaction UDP-alpha-D-glucuronate + NAD(+) = UDP-beta-L-threo-pentopyranos-4-ulose + CO2 + NADH. It catalyses the reaction UDP-4-amino-4-deoxy-beta-L-arabinose + (6R)-10-formyltetrahydrofolate = UDP-4-deoxy-4-formamido-beta-L-arabinose + (6S)-5,6,7,8-tetrahydrofolate + H(+). The protein operates within nucleotide-sugar biosynthesis; UDP-4-deoxy-4-formamido-beta-L-arabinose biosynthesis; UDP-4-deoxy-4-formamido-beta-L-arabinose from UDP-alpha-D-glucuronate: step 1/3. It functions in the pathway nucleotide-sugar biosynthesis; UDP-4-deoxy-4-formamido-beta-L-arabinose biosynthesis; UDP-4-deoxy-4-formamido-beta-L-arabinose from UDP-alpha-D-glucuronate: step 3/3. Its pathway is bacterial outer membrane biogenesis; lipopolysaccharide biosynthesis. Bifunctional enzyme that catalyzes the oxidative decarboxylation of UDP-glucuronic acid (UDP-GlcUA) to UDP-4-keto-arabinose (UDP-Ara4O) and the addition of a formyl group to UDP-4-amino-4-deoxy-L-arabinose (UDP-L-Ara4N) to form UDP-L-4-formamido-arabinose (UDP-L-Ara4FN). The modified arabinose is attached to lipid A and is required for resistance to polymyxin and cationic antimicrobial peptides. This Pseudomonas aeruginosa (strain ATCC 15692 / DSM 22644 / CIP 104116 / JCM 14847 / LMG 12228 / 1C / PRS 101 / PAO1) protein is Bifunctional polymyxin resistance protein ArnA.